A 1068-amino-acid chain; its full sequence is Phosphatidylinositol 4,5-bisphosphate 3-kinase catalytic subunit alpha isoform (1068 aa).

In terms of domain architecture, PI3K-ABD spans 16 to 105 (MPPRILVECL…QPFLKVIEPV (90 aa)). A PI3K-RBD domain is found at 187–289 (KGQIIVVIWV…GRMPNLMLMA (103 aa)). The C2 PI3K-type domain maps to 330-487 (INSALRIKIL…DWFSSVVKFP (158 aa)). The PIK helical domain maps to 517–694 (LARDNELREN…GLLLESYCRA (178 aa)). A PI3K/PI4K catalytic domain is found at 765–1051 (RLEECRIMSS…QMNDAHHGGW (287 aa)). The tract at residues 771 to 777 (IMSSAKR) is G-loop. A catalytic loop region spans residues 912–920 (GIGDRHNSN). The interval 931 to 957 (HIDFGHFLDHKKKKFGYKRERVPFVLT) is activation loop.

The protein belongs to the PI3/PI4-kinase family. In terms of assembly, heterodimer of a catalytic subunit PIK3CA and a p85 regulatory subunit (PIK3R1, PIK3R2 or PIK3R3). Interacts with IRS1 in nuclear extracts. Interacts with RUFY3. Interacts with RASD2. Interacts with APPL1. Interacts with HRAS and KRAS. Interaction with HRAS/KRAS is required for PI3K pathway signaling and cell proliferation stimulated by EGF and FGF2. Interacts with FAM83B; activates the PI3K/AKT signaling cascade.

The catalysed reaction is a 1,2-diacyl-sn-glycero-3-phospho-(1D-myo-inositol-4,5-bisphosphate) + ATP = a 1,2-diacyl-sn-glycero-3-phospho-(1D-myo-inositol-3,4,5-trisphosphate) + ADP + H(+). It carries out the reaction a 1,2-diacyl-sn-glycero-3-phospho-(1D-myo-inositol) + ATP = a 1,2-diacyl-sn-glycero-3-phospho-(1D-myo-inositol-3-phosphate) + ADP + H(+). The enzyme catalyses L-seryl-[protein] + ATP = O-phospho-L-seryl-[protein] + ADP + H(+). It catalyses the reaction 1,2-dioctanoyl-sn-glycero-3-phospho-(1D-myo-inositol-4,5-bisphosphate) + ATP = 1,2-dioctanoyl-sn-glycero-3-phospho-(1D-myo-inositol-3,4,5-trisphosphate) + ADP + H(+). The catalysed reaction is 1-octadecanoyl-2-(5Z,8Z,11Z,14Z)-eicosatetraenoyl-sn-glycero-3-phospho-1D-myo-inositol 4,5-bisphosphate + ATP = 1-octadecanoyl-2-(5Z,8Z,11Z,14Z-eicosatetraenoyl)-sn-glycero-3-phospho-(1D-myo-inositol 3,4,5-triphosphate) + ADP + H(+). It functions in the pathway phospholipid metabolism; phosphatidylinositol phosphate biosynthesis. Functionally, phosphoinositide-3-kinase (PI3K) phosphorylates phosphatidylinositol (PI) and its phosphorylated derivatives at position 3 of the inositol ring to produce 3-phosphoinositides. Uses ATP and PtdIns(4,5)P2 (phosphatidylinositol 4,5-bisphosphate) to generate phosphatidylinositol 3,4,5-trisphosphate (PIP3). PIP3 plays a key role by recruiting PH domain-containing proteins to the membrane, including AKT1 and PDPK1, activating signaling cascades involved in cell growth, survival, proliferation, motility and morphology. Participates in cellular signaling in response to various growth factors. Involved in the activation of AKT1 upon stimulation by receptor tyrosine kinases ligands such as EGF, insulin, IGF1, VEGFA and PDGF. Involved in signaling via insulin-receptor substrate (IRS) proteins. Essential in endothelial cell migration during vascular development through VEGFA signaling, possibly by regulating RhoA activity. Required for lymphatic vasculature development, possibly by binding to RAS and by activation by EGF and FGF2, but not by PDGF. Regulates invadopodia formation through the PDPK1-AKT1 pathway. Participates in cardiomyogenesis in embryonic stem cells through a AKT1 pathway. Participates in vasculogenesis in embryonic stem cells through PDK1 and protein kinase C pathway. Also has serine-protein kinase activity: phosphorylates PIK3R1 (p85alpha regulatory subunit), EIF4EBP1 and HRAS. Plays a role in the positive regulation of phagocytosis and pinocytosis. This chain is Phosphatidylinositol 4,5-bisphosphate 3-kinase catalytic subunit alpha isoform (Pik3ca), found in Mus musculus (Mouse).